We begin with the raw amino-acid sequence, 114 residues long: Ferredoxin (114 aa).

Positions 9 and 17 each coordinate [3Fe-4S] cluster. [4Fe-4S] cluster contacts are provided by Cys-21, Cys-40, Cys-43, and Cys-46. The region spanning Arg-31–Asp-60 is the 4Fe-4S ferredoxin-type domain. Cys-50 is a binding site for [3Fe-4S] cluster.

[4Fe-4S] cluster serves as cofactor. The cofactor is [3Fe-4S] cluster.

Its function is as follows. Ferredoxins are iron-sulfur proteins that transfer electrons in a wide variety of metabolic reactions. The sequence is that of Ferredoxin (fdxA) from Mycobacterium tuberculosis (strain ATCC 25618 / H37Rv).